We begin with the raw amino-acid sequence, 496 residues long: FAD-linked oxidoreductase AFUA_1G00980 (496 aa).

The first 21 residues, 1–21 (MRRATLIPLAIWVAGAAAAAA), serve as a signal peptide directing secretion. N-linked (GlcNAc...) asparagine glycans are attached at residues N49, N122, N205, N258, N344, N351, N371, and N382. Residues 64–243 (MAPTYAVSVR…VEAVYQVTDL (180 aa)) enclose the FAD-binding PCMH-type domain.

It belongs to the oxygen-dependent FAD-linked oxidoreductase family. FAD serves as cofactor.

In terms of biological role, FAD-linked oxidoreductase; part of the gene cluster that mediates the biosynthesis of fumigermin that inhibits germination of spores of the inducing S.rapamycinicus, and thus helps the fungus to defend resources in the shared habitat against a bacterial competitor. The partially reducing polyketide synthase fngA alone is sufficient for the production of fumigermin. FgnA catalyzes the condensation of 3 malonyl-CoA units to an acetyl-CoA starter, and 3 methylations to yield fumigermin. It is remarkable that the five cluster genes including fgnA are conserved in distantly related fungi, supporting the assumption of a fumigermin cluster; it is thus possible that originally all five genes were functional, but that the genes encoding tailoring enzymes became inactive from mutations, similar to the case of the fgnA gene in strains A1163 and Af293. This chain is FAD-linked oxidoreductase AFUA_1G00980, found in Aspergillus fumigatus (strain ATCC MYA-4609 / CBS 101355 / FGSC A1100 / Af293) (Neosartorya fumigata).